Here is an 88-residue protein sequence, read N- to C-terminus: Small ribosomal subunit protein uS15 (88 aa).

This sequence belongs to the universal ribosomal protein uS15 family. As to quaternary structure, part of the 30S ribosomal subunit. Forms a bridge to the 50S subunit in the 70S ribosome, contacting the 23S rRNA.

One of the primary rRNA binding proteins, it binds directly to 16S rRNA where it helps nucleate assembly of the platform of the 30S subunit by binding and bridging several RNA helices of the 16S rRNA. Functionally, forms an intersubunit bridge (bridge B4) with the 23S rRNA of the 50S subunit in the ribosome. This is Small ribosomal subunit protein uS15 from Verminephrobacter eiseniae (strain EF01-2).